Here is a 407-residue protein sequence, read N- to C-terminus: Probable peptidoglycan glycosyltransferase FtsW (407 aa).

The Cytoplasmic segment spans residues 1–25 (MSIDFRNIIKPYPSPIITGRGIDLD). Residues 26–46 (FPMLAGCLALLGLGLVMITSA) traverse the membrane as a helical segment. At 47–65 (SSEVAAVQSGNTLYMMIRH) the chain is on the periplasmic side. A helical transmembrane segment spans residues 66 to 86 (LVYLVIGLGACIVTMMIPIAT). Over 87–89 (WQR) the chain is Cytoplasmic. The helical transmembrane segment at 90-110 (LGWLMLIGAFGLLIMVILPGI) threads the bilayer. At 111–119 (GREVNGSMR) the chain is on the periplasmic side. Residues 120–140 (WIGFGAFNVQPSEIAKVFVVI) form a helical membrane-spanning segment. At 141–155 (YLAGYLVRRQKEVRE) the chain is on the cytoplasmic side. The chain crosses the membrane as a helical span at residues 156–176 (SWMGFFKPFIVLLPMAGLLLM). Over 177-181 (EPDFG) the chain is Periplasmic. Residues 182-202 (ATVVMMGAAAAMLFLGGVGLF) traverse the membrane as a helical segment. Arginine 203 is a topological domain (cytoplasmic). Residues 204–224 (FTLMVVLAVAAVTVLVQAQPY) form a helical membrane-spanning segment. The Periplasmic portion of the chain corresponds to 225 to 283 (RMARLITFTDPWSDQFGSGYQLTQALIAFGRGEWLGVGLGNSVQKQFYLPEAHTDFVFS). The chain crosses the membrane as a helical span at residues 284-304 (VLAEELGVVGSLCTVALFVFV). Residues 305–321 (CVRGMYIGMWAEKAKQY) lie on the Cytoplasmic side of the membrane. A helical transmembrane segment spans residues 322-342 (FAAYVAYGLSFLWIGQFLINI). At 343–355 (GVNVGLLPTKGLT) the chain is on the periplasmic side. A helical membrane pass occupies residues 356–376 (LPFLSYGGSSLVICCACLGLL). The Cytoplasmic segment spans residues 377 to 407 (LRIEWESRTHLGSEEMEFSESDFAEEPTHGR).

The protein belongs to the SEDS family. FtsW subfamily.

It is found in the cell inner membrane. It carries out the reaction [GlcNAc-(1-&gt;4)-Mur2Ac(oyl-L-Ala-gamma-D-Glu-L-Lys-D-Ala-D-Ala)](n)-di-trans,octa-cis-undecaprenyl diphosphate + beta-D-GlcNAc-(1-&gt;4)-Mur2Ac(oyl-L-Ala-gamma-D-Glu-L-Lys-D-Ala-D-Ala)-di-trans,octa-cis-undecaprenyl diphosphate = [GlcNAc-(1-&gt;4)-Mur2Ac(oyl-L-Ala-gamma-D-Glu-L-Lys-D-Ala-D-Ala)](n+1)-di-trans,octa-cis-undecaprenyl diphosphate + di-trans,octa-cis-undecaprenyl diphosphate + H(+). Its pathway is cell wall biogenesis; peptidoglycan biosynthesis. Peptidoglycan polymerase that is essential for cell division. This Pseudomonas fluorescens (strain SBW25) protein is Probable peptidoglycan glycosyltransferase FtsW.